Here is a 289-residue protein sequence, read N- to C-terminus: (3R)-3-[(carboxymethyl)amino]fatty acid oxygenase/decarboxylase (289 aa).

A (3R)-3-[(carboxymethyl)amino]fatty acid is bound by residues tyrosine 65, tyrosine 70, and glycine 93. 2 residues coordinate Fe(2+): histidine 97 and aspartate 99. Residues tyrosine 100 and lysine 158 each coordinate a (3R)-3-[(carboxymethyl)amino]fatty acid. Histidine 260 provides a ligand contact to Fe(2+). Histidine 264 is a 2-oxoglutarate binding site. Residue arginine 275 coordinates a (3R)-3-[(carboxymethyl)amino]fatty acid.

It belongs to the TfdA dioxygenase family. It depends on Fe(2+) as a cofactor.

The enzyme catalyses a (3R)-3-[(carboxymethyl)amino]fatty acid + 2 2-oxoglutarate + 2 O2 = a (3R)-3-isocyanyl-fatty acid + 2 succinate + 3 CO2 + 2 H2O. It catalyses the reaction a (3R)-3-[(carboxymethyl)amino]fatty acid + 2-oxoglutarate + O2 = a (3R)-3-{[carboxy(hydroxy)methyl]amino}fatty acid + succinate + CO2. It carries out the reaction a (3R)-3-{[carboxy(hydroxy)methyl]amino}fatty acid + 2-oxoglutarate + O2 = a (3R)-3-isocyanyl-fatty acid + succinate + 2 CO2 + 2 H2O. Involved in the biosynthesis of a unique class of isonitrile lipopeptides (INLPs) that seem to play a role in metal acquisition in M.marinum. Catalyzes the conversion of (3R)-3-[(carboxymethyl)amino]fatty acids to (3R)-3-isocyanyl-fatty acids through an oxidative decarboxylation mechanism, thereby generating the isonitrile group of INLPs. The protein is (3R)-3-[(carboxymethyl)amino]fatty acid oxygenase/decarboxylase of Mycobacterium marinum (strain ATCC BAA-535 / M).